A 312-amino-acid chain; its full sequence is L-type lectin-like domain-containing protein C126.08c (312 aa).

Residues 1–22 form the signal peptide; sequence MFFSVKNVFLLGIFGFVLGALA. The Extracellular portion of the chain corresponds to 23 to 280; the sequence is ETSHLERLSL…QKKGSFKKRL (258 aa). An L-type lectin-like domain is found at 24–248; the sequence is TSHLERLSLE…EIASILSRTI (225 aa). Residues 281 to 301 traverse the membrane as a helical segment; it reads IILLLSLIVIFSIFALRSYQV. The Cytoplasmic portion of the chain corresponds to 302 to 312; the sequence is QQEKNRRTTVL.

The protein resides in the membrane. It is found in the endoplasmic reticulum. Its subcellular location is the golgi apparatus. It localises to the vacuole. The sequence is that of L-type lectin-like domain-containing protein C126.08c from Schizosaccharomyces pombe (strain 972 / ATCC 24843) (Fission yeast).